The sequence spans 132 residues: Large-conductance mechanosensitive channel (132 aa).

Helical transmembrane passes span 14–34, 39–59, and 68–88; these read VLDM…VDSL, INPI…AVTI, and IGNF…VFLI.

It belongs to the MscL family. Homopentamer.

It localises to the cell membrane. Channel that opens in response to stretch forces in the membrane lipid bilayer. May participate in the regulation of osmotic pressure changes within the cell. The protein is Large-conductance mechanosensitive channel of Latilactobacillus sakei subsp. sakei (strain 23K) (Lactobacillus sakei subsp. sakei).